The primary structure comprises 258 residues: Imidazole glycerol phosphate synthase subunit HisF (258 aa).

Catalysis depends on residues D11 and D130.

It belongs to the HisA/HisF family. As to quaternary structure, heterodimer of HisH and HisF.

It localises to the cytoplasm. The catalysed reaction is 5-[(5-phospho-1-deoxy-D-ribulos-1-ylimino)methylamino]-1-(5-phospho-beta-D-ribosyl)imidazole-4-carboxamide + L-glutamine = D-erythro-1-(imidazol-4-yl)glycerol 3-phosphate + 5-amino-1-(5-phospho-beta-D-ribosyl)imidazole-4-carboxamide + L-glutamate + H(+). It participates in amino-acid biosynthesis; L-histidine biosynthesis; L-histidine from 5-phospho-alpha-D-ribose 1-diphosphate: step 5/9. Its function is as follows. IGPS catalyzes the conversion of PRFAR and glutamine to IGP, AICAR and glutamate. The HisF subunit catalyzes the cyclization activity that produces IGP and AICAR from PRFAR using the ammonia provided by the HisH subunit. The chain is Imidazole glycerol phosphate synthase subunit HisF from Methylobacterium nodulans (strain LMG 21967 / CNCM I-2342 / ORS 2060).